We begin with the raw amino-acid sequence, 1017 residues long: Sodium/potassium-transporting ATPase subunit alpha-2 (1017 aa).

The interval Met-1 to Lys-31 is disordered. Residues Met-1–Pro-82 are Cytoplasmic-facing. Residues Pro-77–Pro-79 form an interaction with phosphoinositide-3 kinase region. A helical membrane pass occupies residues Glu-83–Ala-103. Topologically, residues Ile-104–Tyr-126 are extracellular. A helical transmembrane segment spans residues Leu-127–Ala-147. At Lys-148 to Ile-283 the chain is on the cytoplasmic side. The tract at residues Lys-207–His-228 is disordered. Polar residues predominate over residues Asp-209–Pro-224. The helical transmembrane segment at Glu-284–Ile-303 threads the bilayer. Topologically, residues Leu-304–Ala-315 are extracellular. A helical transmembrane segment spans residues Val-316–Ala-333. Over Thr-334–Leu-766 the chain is Cytoplasmic. Residue Asp-371 is the 4-aspartylphosphate intermediate of the active site. Lys-502 serves as a coordination point for ATP. Residues Asp-711 and Asp-715 each contribute to the Mg(2+) site. The helical transmembrane segment at Lys-767–Leu-786 threads the bilayer. At Phe-787 to Leu-796 the chain is on the extracellular side. The chain crosses the membrane as a helical span at residues Gly-797–Ala-817. Residues Tyr-818–Lys-837 lie on the Cytoplasmic side of the membrane. Residues Leu-838–Phe-860 traverse the membrane as a helical segment. Topologically, residues Phe-861 to Cys-912 are extracellular. A helical membrane pass occupies residues His-913–Lys-932. Topologically, residues Thr-933–Asn-945 are cytoplasmic. Ser-937 carries the post-translational modification Phosphoserine; by PKA. Residues Lys-946–Tyr-964 form a helical membrane-spanning segment. The Extracellular portion of the chain corresponds to Cys-965–Val-979. A helical transmembrane segment spans residues Thr-980–Lys-1000. The Cytoplasmic segment spans residues Leu-1001–Tyr-1017.

Belongs to the cation transport ATPase (P-type) (TC 3.A.3) family. Type IIC subfamily. As to quaternary structure, the sodium/potassium-transporting ATPase is composed of a catalytic alpha subunit, an auxiliary non-catalytic beta subunit and an additional regulatory subunit.

The protein localises to the membrane. It localises to the cell membrane. The catalysed reaction is K(+)(out) + Na(+)(in) + ATP + H2O = K(+)(in) + Na(+)(out) + ADP + phosphate + H(+). Functionally, this is the catalytic component of the active enzyme, which catalyzes the hydrolysis of ATP coupled with the exchange of sodium and potassium ions across the plasma membrane. This action creates the electrochemical gradient of sodium and potassium ions, providing the energy for active transport of various nutrients. This chain is Sodium/potassium-transporting ATPase subunit alpha-2 (ATP1A2), found in Gallus gallus (Chicken).